The sequence spans 89 residues: Small ribosomal subunit protein uS15 (89 aa).

This sequence belongs to the universal ribosomal protein uS15 family. Part of the 30S ribosomal subunit. Forms a bridge to the 50S subunit in the 70S ribosome, contacting the 23S rRNA.

Functionally, one of the primary rRNA binding proteins, it binds directly to 16S rRNA where it helps nucleate assembly of the platform of the 30S subunit by binding and bridging several RNA helices of the 16S rRNA. Its function is as follows. Forms an intersubunit bridge (bridge B4) with the 23S rRNA of the 50S subunit in the ribosome. The chain is Small ribosomal subunit protein uS15 from Vibrio vulnificus (strain YJ016).